Consider the following 71-residue polypeptide: Putative membrane protein insertion efficiency factor (71 aa).

The protein belongs to the UPF0161 family.

Its subcellular location is the cell membrane. Its function is as follows. Could be involved in insertion of integral membrane proteins into the membrane. This is Putative membrane protein insertion efficiency factor from Ruminiclostridium cellulolyticum (strain ATCC 35319 / DSM 5812 / JCM 6584 / H10) (Clostridium cellulolyticum).